A 1173-amino-acid chain; its full sequence is MTGQCCEELQRAPKPRMALRTKKGLKGSIEDVLGDLLGDDTTPPEKPAEPASHAKDTASSPQWQASKAKFLPKDSVEGLAGADAEASSVSDADPQVFLQNMKDLDSMDDDLFGRMKSHQPSGKGAAKGPGKEGPSNHKPAGTLTANEKGYTMPTKKPPPSSSKTGLQYKKFSFEDFEDPLAGLLSDEEEETATKLPAVERKPAPKSPGAAAGQGPSVPLTPGDTPIRKKELLFDEGDDIMTTLGFEDSPKAERKKTGDQEGPLPARSKLDELLGRGTAAKLLTRPGTGERREFQLDKKYQKMGGEESVPARDKEDSWDDETLTFGAYKPTVASSEGRQSRRQSVSRFLGEGGPDPKGESLGFKQSSPPASSPIHPRKGGADWLGLKDNDLDLLSPSPVQKAQQEDSPMTPSLLPPTNQPSAPEPQSAPTGLPSAAKPPAKGARPSLKASQASSPKASEEKEDDWLSHVISQKKSQNLAREERAGPPKDLASLGSLGQTPSGSLPVAQVLEQAPAGEASKPTTQGMAAVRPGVTGSSMSWSQATTVLPVDDPKKGAASASGDFSSREPAVYIPHSQEPTGLSVPIQTLLPESMMQSLLPGSGYQKQLLAAQGQLQSSTAQLQVELLQSQTKLSELEAQVRKLELERAQHRMLLESLQQRHQADLELIEDAHRSRIKVLETSYQQREEQLRREKEVLSAQHASYCREAEQARAELVAQHQRQMAMAEQERDQEVARLRELQQASILEMRKDHEHQLQRLKMLKDQEIDAVTSATSHTRSLNGIIEQMEKFSSSLNTLSSRVEASHLTTSQQRELGIRQQDEQLRALQERLGRQQRDMEEERNRLQEVIGKMEVRLSEQSRLLEQERWRVAAEKTKAESAQRTLEEQRKIMVQQIAMEREELERAKSALLEEQKSVMNKCGEERRRLAAEWAEYFTQQKLSKERAEREAERAMHADSQREGTIISLTKEQAELTVRACELRAKEEKLLAEREALERERQELRLEKDRLHKASLRLQARAQEVEHMSKVASKKYEEGEQALQEAQQMQNEQQGRLQVVQRQQEWLRQQEQRVHQEHLSLAQQRLQLDRVRQEVPASLPGLPPRVQGPAASSRDAVQAPASSSPQCSQPAAAQVPTHLLAKLLLLKHTAEEDHDFLENEQFFLETLKKAPYNMAYHSA.

The disordered stretch occupies residues 17–168 (MALRTKKGLK…PSSSKTGLQY (152 aa)). Residues 46-56 (KPAEPASHAKD) are compositionally biased toward basic and acidic residues. Residues 80–93 (AGADAEASSVSDAD) are compositionally biased toward low complexity. S172 carries the post-translational modification Phosphoserine. Disordered regions lie at residues 180–225 (LAGL…GDTP) and 241–566 (TTLG…SSRE). Over residues 206 to 216 (SPGAAAGQGPS) the composition is skewed to low complexity. Basic and acidic residues-rich tracts occupy residues 247 to 258 (DSPKAERKKTGD) and 287 to 299 (TGER…DKKY). Polar residues-rich tracts occupy residues 331–345 (VASS…QSVS), 396–411 (SPVQ…MTPS), 468–477 (VISQKKSQNL), and 533–544 (TGSSMSWSQATT). Coiled-coil stretches lie at residues 617–742 (TAQL…QQAS), 808–917 (QQRE…MNKC), and 975–1057 (CELR…VQRQ). K1002 participates in a covalent cross-link: Glycyl lysine isopeptide (Lys-Gly) (interchain with G-Cter in SUMO2). Positions 1091–1124 (ASLPGLPPRVQGPAASSRDAVQAPASSSPQCSQP) are disordered. A compositionally biased stretch (low complexity) spans 1110 to 1124 (AVQAPASSSPQCSQP).

In terms of assembly, interacts with PARD3. May interact with FAS cytoplasmic domain. Interacts with TRAPPC14. As to expression, broadly expressed.

The protein resides in the cytoplasm. The protein localises to the cytoskeleton. It is found in the microtubule organizing center. It localises to the centrosome. Its subcellular location is the centriole. The protein resides in the spindle pole. The protein localises to the cell junction. In terms of biological role, keratin-binding protein required for epithelial cell polarization. Involved in apical junction complex (AJC) assembly via its interaction with PARD3. Required for ciliogenesis. The chain is Fas-binding factor 1 (Fbf1) from Mus musculus (Mouse).